Consider the following 157-residue polypeptide: Protein FAM218A (157 aa).

The tract at residues 104-127 (PAVTPPKLPGHSKSEGPPGKVRKR) is disordered.

This Homo sapiens (Human) protein is Protein FAM218A (FAM218A).